A 767-amino-acid chain; its full sequence is Probable NADP-dependent malic enzyme (767 aa).

Positions 1–430 (MDEMNKINYT…QLGSRLNPTA (430 aa)) are malic enzyme. Catalysis depends on Y42, which acts as the Proton donor. The active-site Proton acceptor is K97. A divalent metal cation is bound by residues E139, D140, and D165. Residues 198–201 (AGAA), N290, and N322 each bind NADP(+). Positions 431 to 767 (NYMNFLAEKI…FACVEAIKEV (337 aa)) are phosphate acetyltransferase.

The protein in the N-terminal section; belongs to the malic enzymes family. It in the C-terminal section; belongs to the phosphate acetyltransferase and butyryltransferase family. Mg(2+) is required as a cofactor. Requires Mn(2+) as cofactor.

The enzyme catalyses (S)-malate + NADP(+) = pyruvate + CO2 + NADPH. It carries out the reaction oxaloacetate + H(+) = pyruvate + CO2. This is Probable NADP-dependent malic enzyme from Rickettsia prowazekii (strain Madrid E).